A 253-amino-acid polypeptide reads, in one-letter code: Phosphate import ATP-binding protein PstB (253 aa).

The 242-residue stretch at 7 to 248 folds into the ABC transporter domain; sequence IEVEDLNVYF…PRDKRTEDYI (242 aa). Residue 39–46 participates in ATP binding; the sequence is GPSGCGKS.

Belongs to the ABC transporter superfamily. Phosphate importer (TC 3.A.1.7) family. In terms of assembly, the complex is composed of two ATP-binding proteins (PstB), two transmembrane proteins (PstC and PstA) and a solute-binding protein (PstS).

The protein localises to the cell membrane. The enzyme catalyses phosphate(out) + ATP + H2O = ADP + 2 phosphate(in) + H(+). Part of the ABC transporter complex PstSACB involved in phosphate import. Responsible for energy coupling to the transport system. This is Phosphate import ATP-binding protein PstB from Methanothermobacter thermautotrophicus (strain ATCC 29096 / DSM 1053 / JCM 10044 / NBRC 100330 / Delta H) (Methanobacterium thermoautotrophicum).